The following is a 206-amino-acid chain: Heterochromatin protein 1 (206 aa).

Disordered regions lie at residues 1-24 (MGKK…EEEY) and 47-145 (GYPE…GFDR). A phosphoserine mark is found at Ser-11 and Ser-15. Residues 24–82 (YAVEKIIDRRVRKGKVEYYLKWKGYPETENTWEPENNLDCQDLIQQYEASRKDEEKSAA) form the Chromo 1 domain. Positions 50–60 (ETENTWEPENN) are enriched in low complexity. Basic and acidic residues predominate over residues 72–98 (ASRKDEEKSAASKKDRPSSSAKAKETQ). The binds to Su(var)39 stretch occupies residues 95 to 206 (KETQGRASSS…RLSWYSDNED (112 aa)). A phosphoserine mark is found at Ser-102, Ser-103, and Ser-113. Thr-127, Thr-128, and Thr-134 each carry phosphothreonine. The Chromo 2 domain occupies 147–205 (LEAEKILGASDNNGRLTFLIQFKGVDQAEMVPSSVANEKIPRMVIHFYEERLSWYSDNE).

Homodimer. Probably associates with Su(var)3-9. Interacts with Mcm10. Interacts (via chromoshadow domain) with piwi (via N-terminal region). Interacts with Rrp6. Associates with and may be part of the HipHop-HOAP telomere capping complex but is not required for its stability or telomere localization. Interacts (via the chromo domain 2 (chromoshadow domain) and the hinge region between chromo domains 1 and 2) with cav/HOAP (via C-terminus); the interaction is direct. Each molecule of cav/HOAP interacts with 2 molecules of Su(var)205/HP1. Interacts with HipHop (via N-terminus). Interacts with moi/modigliani; the interaction is direct. Interacts (via chromo domain 1) with His3/histone 3 (via N-terminal tail methylated at 'Lys-10'); the interaction is direct. Salivary gland (at protein level).

The protein resides in the nucleus. Its subcellular location is the nucleoplasm. It is found in the chromosome. It localises to the telomere. Structural component of heterochromatin, involved in gene repression and the modification of position-effect-variegation. Recognizes and binds histone H3 tails methylated at 'Lys-9', leading to epigenetic repression. Stabilizes chromatin-associated RNAs probably by binding to them and thereby preventing their degradation. Associates with, and may be a part of, the HipHop-HOAP complex that recruits the MTV complex to form the terminin telomere-capping complex, which binds to chromosome ends in a sequence-independent manner and prevents telomere fusion. Telomere capping is independent of the origin recognition complex (ORC). This is Heterochromatin protein 1 from Drosophila melanogaster (Fruit fly).